The chain runs to 706 residues: Alpha-hemolysin translocation ATP-binding protein HlyB (706 aa).

In terms of domain architecture, Peptidase C39 spans methionine 1–valine 125. The active site involves histidine 83. A run of 5 helical transmembrane segments spans residues isoleucine 153–leucine 173, leucine 191–alanine 211, alanine 269–tyrosine 289, leucine 295–leucine 315, and valine 388–glycine 408. One can recognise an ABC transmembrane type-1 domain in the interval leucine 154–glutamine 436. One can recognise an ABC transporter domain in the interval isoleucine 468–glutamine 703. Glycine 502–serine 509 contacts ATP.

The protein belongs to the ABC transporter superfamily. Protein-1 exporter (TC 3.A.1.109) family. In terms of assembly, homodimer.

It is found in the cell inner membrane. Functionally, part of the ABC transporter complex HlyBD involved in hemolysin export. Transmembrane domains (TMD) form a pore in the inner membrane and the ATP-binding domain (NBD) is responsible for energy generation. The chain is Alpha-hemolysin translocation ATP-binding protein HlyB (hlyB) from Escherichia coli O157:H7.